We begin with the raw amino-acid sequence, 559 residues long: Malate synthase, glyoxysomal (559 aa).

The active-site Proton acceptor is Arg-173. Asp-459 acts as the Proton donor in catalysis. Positions 557–559 (CKL) match the Microbody targeting signal motif.

It belongs to the malate synthase family.

It is found in the glyoxysome. The enzyme catalyses glyoxylate + acetyl-CoA + H2O = (S)-malate + CoA + H(+). It functions in the pathway carbohydrate metabolism; glyoxylate cycle; (S)-malate from isocitrate: step 2/2. The protein is Malate synthase, glyoxysomal (LIP) of Zea mays (Maize).